The sequence spans 99 residues: MPKRKSPENTEGKDGSKVTKQEPTRRSARLSAKPAPPKPEPKPRKTSAKKEPGAKISRGAKGKKEEKQEAGKEGTAPSENGETKAEEAQKTESVDNEGE.

Composition is skewed to basic and acidic residues over residues 1–25 (MPKRKSPENTEGKDGSKVTKQEPTR), 39–53 (PEPKPRKTSAKKEPG), and 62–72 (GKKEEKQEAGK). The interval 1-99 (MPKRKSPENT…KTESVDNEGE (99 aa)) is disordered. Ser6 is subject to Phosphoserine. Thr10 carries the post-translational modification Phosphothreonine. Ser78 and Ser93 each carry phosphoserine. Residues 81–93 (GETKAEEAQKTES) are compositionally biased toward basic and acidic residues.

Belongs to the HMGN family. As to quaternary structure, interacts with the ligand binding domain of the thyroid receptor (TR) (in vitro). Requires the presence of thyroid hormone for its interaction. Interacts with transcriptional regulator SEHBP. Interacts with nucleosomes. Expressed in kidney, lung, pancreas, testis, skeletal muscle, heart, thyroid gland, pituitary gland, prostate and uterus. Low expression in liver, spleen, placenta and ovaries.

It is found in the nucleus. Its function is as follows. Binds to nucleosomes, regulating chromatin structure and consequently, chromatin-dependent processes such as transcription, DNA replication and DNA repair. Affects both insulin and glucagon levels and modulates the expression of pancreatic genes involved in insulin secretion. Regulates the expression of the glucose transporter SLC2A2 by binding specifically to its promoter region and recruiting PDX1 and additional transcription factors. Regulates the expression of SLC6A9, a glycine transporter which regulates the glycine concentration in synaptic junctions in the central nervous system, by binding to its transcription start site. May play a role in ocular development and astrocyte function. The sequence is that of High mobility group nucleosome-binding domain-containing protein 3 (HMGN3) from Homo sapiens (Human).